The chain runs to 457 residues: Multidrug resistance protein MdtK (457 aa).

12 consecutive transmembrane segments (helical) span residues 11–31 (LLAL…MGFV), 53–73 (IWLP…PVIA), 93–113 (WLAG…GYII), 127–147 (AVGY…FQVA), 160–180 (GMVM…IFIY), 189–209 (GGVG…FSMI), 243–263 (LPIA…ALLV), 276–296 (IALN…AAVT), 314–334 (AART…LFTV), 357–377 (LMLL…GSGI), 387–407 (IFFI…YILA), and 418–438 (PAGF…LMML).

Belongs to the multi antimicrobial extrusion (MATE) (TC 2.A.66.1) family. MdtK subfamily.

Its subcellular location is the cell inner membrane. Multidrug efflux pump that functions probably as a Na(+)/drug antiporter. This is Multidrug resistance protein MdtK from Enterobacter sp. (strain 638).